A 70-amino-acid chain; its full sequence is UPF0352 protein Sfri_2492 (70 aa).

This sequence belongs to the UPF0352 family.

This Shewanella frigidimarina (strain NCIMB 400) protein is UPF0352 protein Sfri_2492.